The sequence spans 363 residues: UDP-N-acetylglucosamine--N-acetylmuramyl-(pentapeptide) pyrophosphoryl-undecaprenol N-acetylglucosamine transferase (363 aa).

Residues 21–23 (TGG), Asn-129, Arg-170, Ser-196, and Gln-290 each bind UDP-N-acetyl-alpha-D-glucosamine.

It belongs to the glycosyltransferase 28 family. MurG subfamily.

It localises to the cell inner membrane. It catalyses the reaction di-trans,octa-cis-undecaprenyl diphospho-N-acetyl-alpha-D-muramoyl-L-alanyl-D-glutamyl-meso-2,6-diaminopimeloyl-D-alanyl-D-alanine + UDP-N-acetyl-alpha-D-glucosamine = di-trans,octa-cis-undecaprenyl diphospho-[N-acetyl-alpha-D-glucosaminyl-(1-&gt;4)]-N-acetyl-alpha-D-muramoyl-L-alanyl-D-glutamyl-meso-2,6-diaminopimeloyl-D-alanyl-D-alanine + UDP + H(+). It functions in the pathway cell wall biogenesis; peptidoglycan biosynthesis. Its function is as follows. Cell wall formation. Catalyzes the transfer of a GlcNAc subunit on undecaprenyl-pyrophosphoryl-MurNAc-pentapeptide (lipid intermediate I) to form undecaprenyl-pyrophosphoryl-MurNAc-(pentapeptide)GlcNAc (lipid intermediate II). The protein is UDP-N-acetylglucosamine--N-acetylmuramyl-(pentapeptide) pyrophosphoryl-undecaprenol N-acetylglucosamine transferase of Synechococcus sp. (strain ATCC 27144 / PCC 6301 / SAUG 1402/1) (Anacystis nidulans).